We begin with the raw amino-acid sequence, 226 residues long: uncharacterized protein (226 aa).

Residues 1 to 112 (MLVEDDHSIS…ELTARVKAAI (112 aa)) enclose the Response regulatory domain. Asp-48 carries the post-translational modification 4-aspartylphosphate. Residues 126–225 (NKVIRIHQLA…LWGIGYKLGE (100 aa)) constitute a DNA-binding region (ompR/PhoB-type).

Phosphorylated by YcbM.

It is found in the cytoplasm. Its function is as follows. Member of the two-component regulatory system YcbM/YcbL. This is an uncharacterized protein from Bacillus subtilis (strain 168).